Reading from the N-terminus, the 388-residue chain is 1-deoxy-D-xylulose 5-phosphate reductoisomerase (388 aa).

NADPH is bound by residues Thr-10, Gly-11, Thr-12, Ile-13, Arg-37, Gln-38, and Asn-122. Lys-123 provides a ligand contact to 1-deoxy-D-xylulose 5-phosphate. Glu-124 provides a ligand contact to NADPH. Asp-148 lines the Mn(2+) pocket. 1-deoxy-D-xylulose 5-phosphate is bound by residues Ser-149, Glu-150, Ser-179, and His-202. Glu-150 contacts Mn(2+). Gly-208 serves as a coordination point for NADPH. Residues Ser-215, Asn-220, Lys-221, and Glu-224 each contribute to the 1-deoxy-D-xylulose 5-phosphate site. Position 224 (Glu-224) interacts with Mn(2+).

Belongs to the DXR family. Mg(2+) serves as cofactor. Mn(2+) is required as a cofactor.

The enzyme catalyses 2-C-methyl-D-erythritol 4-phosphate + NADP(+) = 1-deoxy-D-xylulose 5-phosphate + NADPH + H(+). The protein operates within isoprenoid biosynthesis; isopentenyl diphosphate biosynthesis via DXP pathway; isopentenyl diphosphate from 1-deoxy-D-xylulose 5-phosphate: step 1/6. Catalyzes the NADPH-dependent rearrangement and reduction of 1-deoxy-D-xylulose-5-phosphate (DXP) to 2-C-methyl-D-erythritol 4-phosphate (MEP). The protein is 1-deoxy-D-xylulose 5-phosphate reductoisomerase of Laribacter hongkongensis (strain HLHK9).